We begin with the raw amino-acid sequence, 264 residues long: Tritrans,polycis-undecaprenyl-diphosphate synthase (geranylgeranyl-diphosphate specific) (264 aa).

Asp-43 is an active-site residue. Residue Asp-43 participates in Mg(2+) binding. Residues 44–47 (GNRR), Trp-48, His-60, and 88–90 (STE) contribute to the substrate site. The active-site Proton acceptor is Asn-91. Substrate is bound by residues Phe-92, Arg-94, Arg-213, and 219-221 (RIS). Residue Glu-232 coordinates Mg(2+).

This sequence belongs to the UPP synthase family. In terms of assembly, homodimer. Mg(2+) serves as cofactor.

It catalyses the reaction geranylgeranyl diphosphate + 7 isopentenyl diphosphate = tri-trans,hepta-cis-undecaprenyl diphosphate + 7 diphosphate. Catalyzes the sequential condensation of isopentenyl diphosphate (IPP) with geranylgeranyl diphosphate (GGPP) to yield (2Z,6Z,10Z,14Z,18Z,22Z,26Z,30E,34E,38E)-undecaprenyl diphosphate (tritrans,heptacis-UPP). It is probably the precursor of glycosyl carrier lipids. The sequence is that of Tritrans,polycis-undecaprenyl-diphosphate synthase (geranylgeranyl-diphosphate specific) from Pyrococcus furiosus (strain ATCC 43587 / DSM 3638 / JCM 8422 / Vc1).